The primary structure comprises 553 residues: CTP synthase (553 aa).

The tract at residues 1–270 (MTKFVFVTGG…DRIICEELRI (270 aa)) is amidoligase domain. Ser13 contributes to the CTP binding site. Ser13 contributes to the UTP binding site. Residues 14–19 (SLGKGI) and Asp71 each bind ATP. Asp71 and Glu144 together coordinate Mg(2+). CTP-binding positions include 151–153 (DIE), 191–196 (KTKPTQ), and Lys227. Residues 191 to 196 (KTKPTQ) and Lys227 contribute to the UTP site. Residues 295–547 (TIGMVGKYVD…VEAALAHQQN (253 aa)) form the Glutamine amidotransferase type-1 domain. Gly356 provides a ligand contact to L-glutamine. The active-site Nucleophile; for glutamine hydrolysis is Cys383. L-glutamine is bound by residues 384–387 (LGMQ), Glu407, and Arg473. Residues His520 and Glu522 contribute to the active site.

It belongs to the CTP synthase family. In terms of assembly, homotetramer.

It carries out the reaction UTP + L-glutamine + ATP + H2O = CTP + L-glutamate + ADP + phosphate + 2 H(+). The catalysed reaction is L-glutamine + H2O = L-glutamate + NH4(+). The enzyme catalyses UTP + NH4(+) + ATP = CTP + ADP + phosphate + 2 H(+). It participates in pyrimidine metabolism; CTP biosynthesis via de novo pathway; CTP from UDP: step 2/2. Its activity is regulated as follows. Allosterically activated by GTP, when glutamine is the substrate; GTP has no effect on the reaction when ammonia is the substrate. The allosteric effector GTP functions by stabilizing the protein conformation that binds the tetrahedral intermediate(s) formed during glutamine hydrolysis. Inhibited by the product CTP, via allosteric rather than competitive inhibition. In terms of biological role, catalyzes the ATP-dependent amination of UTP to CTP with either L-glutamine or ammonia as the source of nitrogen. Regulates intracellular CTP levels through interactions with the four ribonucleotide triphosphates. The polypeptide is CTP synthase (Ralstonia pickettii (strain 12J)).